A 159-amino-acid polypeptide reads, in one-letter code: Peptide deformylase (159 aa).

Cysteine 88 and histidine 130 together coordinate Fe cation. Glutamate 131 is an active-site residue. Histidine 134 contributes to the Fe cation binding site.

It belongs to the polypeptide deformylase family. Requires Fe(2+) as cofactor.

The enzyme catalyses N-terminal N-formyl-L-methionyl-[peptide] + H2O = N-terminal L-methionyl-[peptide] + formate. In terms of biological role, removes the formyl group from the N-terminal Met of newly synthesized proteins. Requires at least a dipeptide for an efficient rate of reaction. N-terminal L-methionine is a prerequisite for activity but the enzyme has broad specificity at other positions. This chain is Peptide deformylase, found in Caldanaerobacter subterraneus subsp. tengcongensis (strain DSM 15242 / JCM 11007 / NBRC 100824 / MB4) (Thermoanaerobacter tengcongensis).